A 314-amino-acid chain; its full sequence is Transcriptional regulatory protein GlnL (314 aa).

Positions 2-118 (RFFIADDDRA…EIVTVLQKVK (117 aa)) constitute a Response regulatory domain. Position 54 is a 4-aspartylphosphate (aspartate 54).

Phosphorylated by GlnK.

The protein resides in the cytoplasm. Member of the two-component regulatory system GlnL/GlnK that positively regulates the expression of the glsA-glnT operon in response to glutamine. GlnL binds the promoter region of glsA-glnT in vitro. The sequence is that of Transcriptional regulatory protein GlnL (glnL) from Bacillus subtilis (strain 168).